The chain runs to 138 residues: Basic leucine zipper 8 (138 aa).

Residues 30–67 (NLPATSDDSSRTAEDNERKRRRKVSNRESARRSRMRKQ) form a disordered region. The segment covering 37–47 (DSSRTAEDNER) has biased composition (basic and acidic residues). In terms of domain architecture, bZIP spans 45–108 (NERKRRRKVS…EKVIEENMKL (64 aa)). Positions 47-68 (RKRRRKVSNRESARRSRMRKQR) are basic motif. A Nuclear localization signal motif is present at residues 48–55 (KRRRKVSN). The leucine-zipper stretch occupies residues 73-87 (LWSMLVQLINKNKSL).

Belongs to the bZIP family. As to quaternary structure, homodimer.

It is found in the nucleus. The sequence is that of Basic leucine zipper 8 from Arabidopsis thaliana (Mouse-ear cress).